Here is a 236-residue protein sequence, read N- to C-terminus: Sugar fermentation stimulation protein homolog (236 aa).

This sequence belongs to the SfsA family.

In Paramagnetospirillum magneticum (strain ATCC 700264 / AMB-1) (Magnetospirillum magneticum), this protein is Sugar fermentation stimulation protein homolog.